A 346-amino-acid chain; its full sequence is c-di-GMP synthase (346 aa).

It belongs to the CD-NTase family.

The catalysed reaction is 2 GTP = 3',3'-c-di-GMP + 2 diphosphate. In terms of biological role, cyclic nucleotide synthase (second messenger synthase) of a CBASS antivirus system. CBASS (cyclic oligonucleotide-based antiphage signaling system) provides immunity against bacteriophage. The CD-NTase protein synthesizes cyclic nucleotides in response to infection; these serve as specific second messenger signals. The signals activate a diverse range of effectors, leading to bacterial cell death and thus abortive phage infection. A type I-D(GG) CBASS system. Functionally, cyclic dinucleotide synthase that catalyzes the synthesis of c-di-GMP, has no activity with other NTP substrates. The polypeptide is c-di-GMP synthase (Lachnospiraceae bacterium (strain RUG226)).